A 185-amino-acid chain; its full sequence is Ribosome-recycling factor (185 aa).

This sequence belongs to the RRF family.

The protein localises to the cytoplasm. Its function is as follows. Responsible for the release of ribosomes from messenger RNA at the termination of protein biosynthesis. May increase the efficiency of translation by recycling ribosomes from one round of translation to another. The sequence is that of Ribosome-recycling factor from Aeromonas hydrophila subsp. hydrophila (strain ATCC 7966 / DSM 30187 / BCRC 13018 / CCUG 14551 / JCM 1027 / KCTC 2358 / NCIMB 9240 / NCTC 8049).